The sequence spans 777 residues: Myotubularin-related protein 10 (777 aa).

Residues 196–217 (PSGDGGGGGGGGNGAGGGSSQK) are disordered. Over residues 197-214 (SGDGGGGGGGGNGAGGGS) the composition is skewed to gly residues. The Myotubularin phosphatase domain maps to 221–661 (FETYSDWDRE…THIKLWKLCY (441 aa)). Phosphoserine occurs at positions 607 and 751.

It belongs to the protein-tyrosine phosphatase family. Non-receptor class myotubularin subfamily.

The polypeptide is Myotubularin-related protein 10 (MTMR10) (Homo sapiens (Human)).